The sequence spans 208 residues: Proteasome subunit beta 2 (208 aa).

Residues 1-14 (MGNELQLENKILKG) constitute a propeptide, removed in mature form; by autocatalysis. The Nucleophile role is filled by Thr-15.

Belongs to the peptidase T1B family. As to quaternary structure, the 20S proteasome core is composed of 14 alpha and 14 beta subunits that assemble into four stacked heptameric rings, resulting in a barrel-shaped structure. The two inner rings, each composed of seven catalytic beta subunits, are sandwiched by two outer rings, each composed of seven alpha subunits. The catalytic chamber with the active sites is on the inside of the barrel. Has a gated structure, the ends of the cylinder being occluded by the N-termini of the alpha-subunits. Is capped at one or both ends by the proteasome regulatory ATPase, PAN.

Its subcellular location is the cytoplasm. The catalysed reaction is Cleavage of peptide bonds with very broad specificity.. Its activity is regulated as follows. The formation of the proteasomal ATPase PAN-20S proteasome complex, via the docking of the C-termini of PAN into the intersubunit pockets in the alpha-rings, triggers opening of the gate for substrate entry. Interconversion between the open-gate and close-gate conformations leads to a dynamic regulation of the 20S proteasome proteolysis activity. In terms of biological role, component of the proteasome core, a large protease complex with broad specificity involved in protein degradation. The sequence is that of Proteasome subunit beta 2 from Saccharolobus solfataricus (strain ATCC 35092 / DSM 1617 / JCM 11322 / P2) (Sulfolobus solfataricus).